Reading from the N-terminus, the 454-residue chain is Natural cytotoxicity triggering receptor 3 ligand 1 (454 aa).

An N-terminal signal peptide occupies residues methionine 1 to glycine 24. Over aspartate 25–serine 262 the chain is Extracellular. The Ig-like V-type domain maps to lysine 27 to glutamate 138. N-linked (GlcNAc...) asparagine glycosylation is found at asparagine 43 and asparagine 57. A disulfide bridge links cysteine 48 with cysteine 122. Interaction with NCR3 stretches follow at residues threonine 59–glycine 62 and threonine 127–lysine 130. The Ig-like C1-type domain maps to proline 143 to threonine 244. A disulfide bridge connects residues cysteine 163 and cysteine 228. Residues asparagine 174, asparagine 208, asparagine 216, asparagine 242, and asparagine 260 are each glycosylated (N-linked (GlcNAc...) asparagine). The helical transmembrane segment at isoleucine 263–proline 283 threads the bilayer. Residues tryptophan 284–glutamine 454 lie on the Cytoplasmic side of the membrane. The retroviral-Gag-like stretch occupies residues serine 291–tryptophan 429. Residues glycine 395–glutamine 454 form a disordered region. Positions serine 397–alanine 416 are enriched in basic and acidic residues. The segment covering threonine 435–glutamine 454 has biased composition (low complexity).

Monomer. Interacts specifically with NCR3, but not with other natural killer cell-activating receptors, including NCR1, NCR2 and KLRK1. As to expression, not detected in any normal tissue tested. Expressed at the surface of several tumor cell lines including T and B-lymphomas, myeloid leukemias, melanomas, carcinomas and large T SV40 antigen-transformed cells (at protein level).

The protein resides in the cell membrane. Its function is as follows. Triggers NCR3-dependent natural killer cell activation. The sequence is that of Natural cytotoxicity triggering receptor 3 ligand 1 (NCR3LG1) from Homo sapiens (Human).